A 1365-amino-acid chain; its full sequence is MTSTPSKSRKSAKAAKAAKAEAAAFAKSRALSKTPPPFRNRVVDKKVLKELVAWAFKNHGTAATASMADQLKDLGFKYATQAAVSISVNDLKVPAAKKDLLDQAEELITETEESYRLGVITEVERHTKVIDTWTETNERLVDAVKKNFNDNDPLNSVWMMANSGARGNMSQVRQLVGMRGLMANPQGEIIDLPIRTNFREGLTVTEYVISSYGARKGLVDTALRTADSGYLTRRLVDVAQDVIVREDDCGTMRSIMVKAEDGRFGNRLVGRLTADQVLGADGEVIAERNSEIDPPLSKRFEAAGVSALMVRSPLTCEANRSVCRKCYGWALAHNQLVDLGEAVGIIAAQSIGEPGTQLTMRTFHTGGVSTAESGVVRSKFEGTVEFGSKAKVRPYRTPHGVNAQQSDVDFSLTIKPSGSGKPQKIEITNGSLLFVDDGQKIASDVTVATIAAGAVQKSVEKATKDVICDLAGQVSYDPTIQPREVTDRQGNITHKAQRLGRMWVLAGDVYNLPPNARPVVSSGGSVIESQVLAEASQASEYGGAIRLREALGDSREVQIVTTSMTLRDFKLLGESTHAGEIWNLEAKDGTRYRLNTIPGSKIGNAEVIAELADDRFRTQTGGLVKFAPGLAIKKARSAKNGYEVNKGGTLLWIPQETHEINKDISLLMITDGQWIEAGTEVVKDIFSQTAGIVSVTQKNDILREIIVRSGSFHLCTEKKALERFQGDGVMVNPGEAIAKGISSDAMVFVQAVETPEGTGLLLRPVEEYTIPNEAQLPDLGHVKQPNGPHLGIKATQRLAFKDNELVKSVEGVELLRTQLMLETFDTTPQMTVDVEAVPDKRAKTIERLQLVILESILVRRDTISDSSHGSTHTELQVEDGQSIKAGDVVATTQILCKQAGVAEMPEATEDEPVRRLIVERPEDTITINTSGAPVVTVGQRVVDGEELAQGQPSDCCGEVEQVSANSVTMRLGRPYMISPDSLLHVRDGDLVQRGDGLALLVFERQKTGDIVQGLPRIEELLEARRPRESSILCKKPGTVEIKQGEDDEFTTVTVIESDDAIAEYPILLGRNVMVSDGQQVNAGELLTDGPINPHELLECFFEDLRSRKPLMDAAQEAIAKLQHRLVTEVQNVYKSQGVSIHDKHIEVIVRQMTSKVRIEDAGDTTLLPGELIELRQVENTNQAMSITGGAPAEFTPVLLGITKASLNTDSFISAASFQETTRVLTEAAIEGKSDWLRGLKENVIIGRLIPAGTGFSGFEEELRAEAGPHPDILSEDPAGYRRMQNLRPDYTVDMPAAPAAKSTALLDDPSAADLEATRSRHGIEAEASNFAAFTRPDADNELAEEQVLDPAAVENLQEQGLLSDE.

Positions 249, 316, 323, and 326 each coordinate Zn(2+).

Belongs to the RNA polymerase beta' chain family. RpoC2 subfamily. As to quaternary structure, in cyanobacteria the RNAP catalytic core is composed of 2 alpha, 1 beta, 1 beta', 1 gamma and 1 omega subunit. When a sigma factor is associated with the core the holoenzyme is formed, which can initiate transcription. Zn(2+) serves as cofactor.

The enzyme catalyses RNA(n) + a ribonucleoside 5'-triphosphate = RNA(n+1) + diphosphate. Its function is as follows. DNA-dependent RNA polymerase catalyzes the transcription of DNA into RNA using the four ribonucleoside triphosphates as substrates. The polypeptide is DNA-directed RNA polymerase subunit beta' (Synechococcus sp. (strain CC9311)).